A 504-amino-acid polypeptide reads, in one-letter code: Melianol synthase CYP71BQ5 (504 aa).

The chain crosses the membrane as a helical span at residues 2–22 (EFRLPSLPVFLSFLLFFLMLV). Cysteine 442 lines the heme pocket.

This sequence belongs to the cytochrome P450 family. Requires heme as cofactor. Mainly expressed in fruits and leaves.

The protein resides in the membrane. The catalysed reaction is dihydroniloticin + 2 reduced [NADPH--hemoprotein reductase] + 2 O2 = melianol + 2 oxidized [NADPH--hemoprotein reductase] + 3 H2O + 2 H(+). It functions in the pathway secondary metabolite biosynthesis; terpenoid biosynthesis. In terms of biological role, monooxygenase involved in the biosynthesis of limonoids triterpene natural products such as azadirachtin, an antifeedant widely used as bioinsecticide, and possessing many medicinal applications including anti-tumoral, anti-malarial, anti-rheumatic, antibacterial, anti-inflammatory, anti-pyretic and diuretic effects. Catalyzes the conversion of dihydroniloticin to the protolimonoid melianol. The chain is Melianol synthase CYP71BQ5 from Azadirachta indica (Neem tree).